We begin with the raw amino-acid sequence, 555 residues long: Chaperonin GroEL 2 (555 aa).

Residues 29-32 (TLGP), 86-90 (DGTTT), Gly414, 480-482 (NAL), and Asp496 each bind ATP.

The protein belongs to the chaperonin (HSP60) family. Forms a cylinder of 14 subunits composed of two heptameric rings stacked back-to-back. Interacts with the co-chaperonin GroES.

The protein resides in the cytoplasm. The catalysed reaction is ATP + H2O + a folded polypeptide = ADP + phosphate + an unfolded polypeptide.. In terms of biological role, together with its co-chaperonin GroES, plays an essential role in assisting protein folding. The GroEL-GroES system forms a nano-cage that allows encapsulation of the non-native substrate proteins and provides a physical environment optimized to promote and accelerate protein folding. The polypeptide is Chaperonin GroEL 2 (Synechococcus sp. (strain ATCC 27144 / PCC 6301 / SAUG 1402/1) (Anacystis nidulans)).